An 86-amino-acid polypeptide reads, in one-letter code: Putative membrane protein insertion efficiency factor (86 aa).

Positions 64 to 86 are disordered; the sequence is GVDPVPKKSSSKTSTTACGCGHS. Over residues 70–79 the composition is skewed to low complexity; the sequence is KKSSSKTSTT.

It belongs to the UPF0161 family.

It localises to the cell inner membrane. Could be involved in insertion of integral membrane proteins into the membrane. In Janthinobacterium sp. (strain Marseille) (Minibacterium massiliensis), this protein is Putative membrane protein insertion efficiency factor.